A 1059-amino-acid polypeptide reads, in one-letter code: Tyrosine-protein kinase-like otk (1059 aa).

The signal sequence occupies residues 1 to 23; it reads MDMLMMWSICLFVCIFMAPFSCG. Over 24-597 the chain is Extracellular; the sequence is SGSSSRFIQV…GDGGFLATRA (574 aa). 5 Ig-like C2-type domains span residues 28–112, 113–202, 258–377, 380–475, and 480–570; these read SRFI…REAS, PTAK…RVMS, PEGL…LAIN, PGIL…VSIN, and PKFS…AVLT. The N-linked (GlcNAc...) asparagine glycan is linked to Asn42. 4 cysteine pairs are disulfide-bonded: Cys49–Cys99, Cys141–Cys191, Cys283–Cys366, and Cys411–Cys459. Asn348, Asn429, Asn441, Asn456, Asn469, Asn524, and Asn536 each carry an N-linked (GlcNAc...) asparagine glycan. An intrachain disulfide couples Cys502 to Cys554. The chain crosses the membrane as a helical span at residues 598 to 618; that stretch reads VLITMTVALAYIVLVVGLMLW. The Cytoplasmic segment spans residues 619–1059; it reads CRYRRQARKA…ALSKAMQNSE (441 aa). The tract at residues 639–695 is disordered; it reads GGEQAGGEGSTSGNPKASEQEPCLGKQQRNGRNGKSKSNGDPQKSDDTACSQQSRAS. Polar residues predominate over residues 665-693; that stretch reads QQRNGRNGKSKSNGDPQKSDDTACSQQSR. Ser698 is subject to Phosphoserine. One can recognise a Protein kinase; inactive domain in the interval 712–1055; that stretch reads LSELIQIGRG…QLGAALSKAM (344 aa). The interval 739-781 is disordered; the sequence is AQANDKDSDNDKQHSNSENGSGGSSGSTTLSTLNEKRRSKTSM. Basic and acidic residues predominate over residues 742–753; it reads NDKDSDNDKQHS.

Belongs to the protein kinase superfamily. Tyr protein kinase family. Insulin receptor subfamily. In terms of assembly, interacts with plexA; component of a receptor complex that mediates the repulsive signaling in response to Semaphorin ligands.

It localises to the cell membrane. Its function is as follows. Acts as a calcium-dependent, homophilic cell adhesion molecule that regulates neural recognition during the development of the nervous system. Component of the repulsive Plexin signaling response to regulate motor axon guidance at the embryonic stage. Also component of a receptor complex that is required in the adult visual system to innervate the lamina layer; specific targeting of R1-R6 axons. In Drosophila willistoni (Fruit fly), this protein is Tyrosine-protein kinase-like otk.